The sequence spans 583 residues: Phosphoglucomutase, cytoplasmic (583 aa).

The segment at 1–20 (MATFKVSRVETKPYDGQKPG) is disordered. Positions 25 and 124 each coordinate alpha-D-glucose 1,6-bisphosphate. Serine 124 functions as the Phosphoserine intermediate in the catalytic mechanism. Mg(2+) contacts are provided by serine 124, aspartate 300, aspartate 302, and aspartate 304. Serine 124 carries the phosphoserine modification. The alpha-D-glucose 1,6-bisphosphate site is built by aspartate 304, arginine 305, threonine 368, glutamate 387, serine 389, and lysine 400.

Belongs to the phosphohexose mutase family. Monomer. Mg(2+) serves as cofactor.

Its subcellular location is the cytoplasm. The enzyme catalyses alpha-D-glucose 1-phosphate = alpha-D-glucose 6-phosphate. It carries out the reaction O-phospho-L-seryl-[protein] + alpha-D-glucose 1-phosphate = alpha-D-glucose 1,6-bisphosphate + L-seryl-[protein]. It catalyses the reaction alpha-D-glucose 1,6-bisphosphate + L-seryl-[protein] = O-phospho-L-seryl-[protein] + alpha-D-glucose 6-phosphate. Catalyzes the reversible isomerization of alpha-D-glucose 1-phosphate to alpha-D-glucose 6-phosphate. The mechanism proceeds via the intermediate compound alpha-D-glucose 1,6-bisphosphate. This enzyme participates in both the breakdown and synthesis of glucose. This chain is Phosphoglucomutase, cytoplasmic (PGM1), found in Mesembryanthemum crystallinum (Common ice plant).